Reading from the N-terminus, the 257-residue chain is Imidazole glycerol phosphate synthase subunit HisF (257 aa).

Catalysis depends on residues Asp-11 and Asp-130.

Belongs to the HisA/HisF family. In terms of assembly, heterodimer of HisH and HisF.

It localises to the cytoplasm. The catalysed reaction is 5-[(5-phospho-1-deoxy-D-ribulos-1-ylimino)methylamino]-1-(5-phospho-beta-D-ribosyl)imidazole-4-carboxamide + L-glutamine = D-erythro-1-(imidazol-4-yl)glycerol 3-phosphate + 5-amino-1-(5-phospho-beta-D-ribosyl)imidazole-4-carboxamide + L-glutamate + H(+). It participates in amino-acid biosynthesis; L-histidine biosynthesis; L-histidine from 5-phospho-alpha-D-ribose 1-diphosphate: step 5/9. IGPS catalyzes the conversion of PRFAR and glutamine to IGP, AICAR and glutamate. The HisF subunit catalyzes the cyclization activity that produces IGP and AICAR from PRFAR using the ammonia provided by the HisH subunit. This chain is Imidazole glycerol phosphate synthase subunit HisF, found in Photobacterium profundum (strain SS9).